We begin with the raw amino-acid sequence, 204 residues long: Holliday junction branch migration complex subunit RuvA (204 aa).

The tract at residues 1 to 64 (MIGRLQGILL…EDAHLLFGFS (64 aa)) is domain I. Positions 65–143 (AKTDRTLFRE…GIKQPDFFVE (79 aa)) are domain II. Residues 144 to 155 (SSHVGAVDPVTT) form a flexible linker region. A domain III region spans residues 156–204 (SPEVPAEEAVAALMALGYKASDAEKMVKRIAKPHLTSEQLIREALKAAL).

It belongs to the RuvA family. In terms of assembly, homotetramer. Forms an RuvA(8)-RuvB(12)-Holliday junction (HJ) complex. HJ DNA is sandwiched between 2 RuvA tetramers; dsDNA enters through RuvA and exits via RuvB. An RuvB hexamer assembles on each DNA strand where it exits the tetramer. Each RuvB hexamer is contacted by two RuvA subunits (via domain III) on 2 adjacent RuvB subunits; this complex drives branch migration. In the full resolvosome a probable DNA-RuvA(4)-RuvB(12)-RuvC(2) complex forms which resolves the HJ.

The protein localises to the cytoplasm. The RuvA-RuvB-RuvC complex processes Holliday junction (HJ) DNA during genetic recombination and DNA repair, while the RuvA-RuvB complex plays an important role in the rescue of blocked DNA replication forks via replication fork reversal (RFR). RuvA specifically binds to HJ cruciform DNA, conferring on it an open structure. The RuvB hexamer acts as an ATP-dependent pump, pulling dsDNA into and through the RuvAB complex. HJ branch migration allows RuvC to scan DNA until it finds its consensus sequence, where it cleaves and resolves the cruciform DNA. This chain is Holliday junction branch migration complex subunit RuvA, found in Mannheimia succiniciproducens (strain KCTC 0769BP / MBEL55E).